The primary structure comprises 208 residues: Outer-membrane lipoprotein carrier protein (208 aa).

An N-terminal signal peptide occupies residues 1 to 23 (MKKTVKNLTALLTLALAAPWALA).

It belongs to the LolA family. In terms of assembly, monomer.

Its subcellular location is the periplasm. Its function is as follows. Participates in the translocation of lipoproteins from the inner membrane to the outer membrane. Only forms a complex with a lipoprotein if the residue after the N-terminal Cys is not an aspartate (The Asp acts as a targeting signal to indicate that the lipoprotein should stay in the inner membrane). The protein is Outer-membrane lipoprotein carrier protein of Actinobacillus succinogenes (strain ATCC 55618 / DSM 22257 / CCUG 43843 / 130Z).